Consider the following 221-residue polypeptide: UPF0758 protein Ent638_0101 (221 aa).

Residues 99–221 enclose the MPN domain; that stretch reads PLLSPEMTKD…YVSFAEQGWI (123 aa). Zn(2+) contacts are provided by histidine 170, histidine 172, and aspartate 183. A JAMM motif motif is present at residues 170 to 183; the sequence is HNHPSGCAEPSKAD.

Belongs to the UPF0758 family. YicR subfamily.

This Enterobacter sp. (strain 638) protein is UPF0758 protein Ent638_0101.